We begin with the raw amino-acid sequence, 499 residues long: Probable mitochondrial-processing peptidase subunit alpha-2, chloroplastic/mitochondrial (499 aa).

Belongs to the peptidase M16 family. As to quaternary structure, heterodimer of alpha and beta subunits, forming the mitochondrial processing protease (MPP) in which subunit alpha is involved in substrate recognition and binding and subunit beta is the catalytic subunit. Component of the ubiquinol-cytochrome c oxidoreductase (cytochrome b-c1 complex, complex III, CIII), a multisubunit enzyme composed of 10 subunits. The complex is composed of 3 respiratory subunits cytochrome b (MT-CYB), cytochrome c1 (CYC1-1 or CYC1-2) and Rieske protein (UCR1-1 or UCR1-2), 2 core protein subunits MPPalpha1 (or MPPalpha2) and MPPB, and 5 low-molecular weight protein subunits QCR7-1 (or QCR7-2), UCRQ-1 (or UCRQ-2), QCR9, UCRY and probably QCR6-1 (or QCR6-2). The complex exists as an obligatory dimer and forms supercomplexes (SCs) in the inner mitochondrial membrane with NADH-ubiquinone oxidoreductase (complex I, CI), resulting in different assemblies (supercomplexes SCI(1)III(2) and SCI(2)III(4)). Interacts with TIM23-2.

It localises to the plastid. The protein resides in the chloroplast stroma. The protein localises to the mitochondrion matrix. It is found in the mitochondrion inner membrane. Its function is as follows. Substrate recognition and binding subunit of the essential mitochondrial processing protease (MPP), which cleaves the mitochondrial sequence off newly imported precursors proteins. In terms of biological role, component of the ubiquinol-cytochrome c oxidoreductase, a multisubunit transmembrane complex that is part of the mitochondrial electron transport chain which drives oxidative phosphorylation. The respiratory chain contains 3 multisubunit complexes succinate dehydrogenase (complex II, CII), ubiquinol-cytochrome c oxidoreductase (cytochrome b-c1 complex, complex III, CIII) and cytochrome c oxidase (complex IV, CIV), that cooperate to transfer electrons derived from NADH and succinate to molecular oxygen, creating an electrochemical gradient over the inner membrane that drives transmembrane transport and the ATP synthase. The cytochrome b-c1 complex catalyzes electron transfer from ubiquinol to cytochrome c, linking this redox reaction to translocation of protons across the mitochondrial inner membrane, with protons being carried across the membrane as hydrogens on the quinol. In the process called Q cycle, 2 protons are consumed from the matrix, 4 protons are released into the intermembrane space and 2 electrons are passed to cytochrome c. This Arabidopsis thaliana (Mouse-ear cress) protein is Probable mitochondrial-processing peptidase subunit alpha-2, chloroplastic/mitochondrial (MPPalpha2).